The sequence spans 86 residues: Putative pro-MCH-like protein 1 (86 aa).

The segment at 31–49 is NGE-like; that stretch reads GSVAFPAENGVQDTESTQE. Positions 38–62 are disordered; that stretch reads ENGVQDTESTQEKRETGDEENSAKF. Residues 52–64 form an NEI-like region; sequence ETGDEENSAKFPV. The tract at residues 68–86 is melanin-concentrating hormone-like; that stretch reads DFDTLSCMLGRVYQSCWQV.

The protein belongs to the melanin-concentrating hormone family. In terms of tissue distribution, expressed in testis and brain.

The chain is Putative pro-MCH-like protein 1 (PMCHL1) from Homo sapiens (Human).